The chain runs to 216 residues: Peptide methionine sulfoxide reductase MsrA (216 aa).

Residue C54 is part of the active site.

This sequence belongs to the MsrA Met sulfoxide reductase family.

It catalyses the reaction L-methionyl-[protein] + [thioredoxin]-disulfide + H2O = L-methionyl-(S)-S-oxide-[protein] + [thioredoxin]-dithiol. The catalysed reaction is [thioredoxin]-disulfide + L-methionine + H2O = L-methionine (S)-S-oxide + [thioredoxin]-dithiol. Its function is as follows. Has an important function as a repair enzyme for proteins that have been inactivated by oxidation. Catalyzes the reversible oxidation-reduction of methionine sulfoxide in proteins to methionine. This Xanthomonas campestris pv. phaseoli protein is Peptide methionine sulfoxide reductase MsrA.